A 178-amino-acid chain; its full sequence is Hypoxanthine phosphoribosyltransferase (178 aa).

R43 and G44 together coordinate diphosphate. E99 is a binding site for GMP. E99 is an IMP binding site. 2 residues coordinate Mg(2+): E99 and D100. D103 functions as the Proton acceptor in the catalytic mechanism. Residues 103 to 108, K131, and D159 each bind GMP; that span reads DSGNTL. IMP-binding positions include 103 to 108 and K131; that span reads DSGNTL. R165 provides a ligand contact to diphosphate.

The protein belongs to the purine/pyrimidine phosphoribosyltransferase family. In terms of assembly, homotetramer. The cofactor is Mg(2+).

It is found in the cytoplasm. It carries out the reaction IMP + diphosphate = hypoxanthine + 5-phospho-alpha-D-ribose 1-diphosphate. The catalysed reaction is GMP + diphosphate = guanine + 5-phospho-alpha-D-ribose 1-diphosphate. The protein operates within purine metabolism; IMP biosynthesis via salvage pathway; IMP from hypoxanthine: step 1/1. Purine salvage pathway enzyme which catalyzes the transfer of the ribosyl-5-phosphate group from 5-phospho-alpha-D-ribose 1-diphosphate (PRPP) to the N9 position of hypoxanthine to yield IMP (inosine 5'-monophosphate). To a lesser extent, can also act on guanine leading to GMP, but shows a highly less efficient activity with xanthine. The chain is Hypoxanthine phosphoribosyltransferase (hpt) from Salmonella typhimurium (strain LT2 / SGSC1412 / ATCC 700720).